Here is a 155-residue protein sequence, read N- to C-terminus: CASP-like protein 5B2 (155 aa).

Topologically, residues 1 to 18 (MWEVAWWRPGTWGGLAMR) are cytoplasmic. The chain crosses the membrane as a helical span at residues 19–39 (VGQVAFAGASIGVMASGAGFA). Residue Asn40 is glycosylated (N-linked (GlcNAc...) asparagine). Residues 40 to 43 (NYTA) lie on the Extracellular side of the membrane. A helical transmembrane segment spans residues 44–64 (FCYLIASMGLQSLWSLGLACL). Residues 65–77 (DVYALTVKRDLNN) are Cytoplasmic-facing. The helical transmembrane segment at 78 to 98 (ALLVSLFVIGDWVTALLSFAA) threads the bilayer. Over 99–128 (SCSAGGVMVLFKRDVLFCRRYPQLPCGRFE) the chain is Extracellular. Residues 129–149 (LAVALAFLSWALSATSAIIMF) traverse the membrane as a helical segment. Topologically, residues 150–155 (CLLAAF) are cytoplasmic.

The protein belongs to the Casparian strip membrane proteins (CASP) family. In terms of assembly, homodimer and heterodimers.

It localises to the cell membrane. In Oryza sativa subsp. indica (Rice), this protein is CASP-like protein 5B2.